Consider the following 142-residue polypeptide: Acetyltransferase SG1711 (142 aa).

The region spanning 1-142 (MEIRVFRHDD…GKRLIEDQEY (142 aa)) is the N-acetyltransferase domain.

This sequence belongs to the acetyltransferase family. YpeA subfamily.

The polypeptide is Acetyltransferase SG1711 (Sodalis glossinidius (strain morsitans)).